The chain runs to 137 residues: MSDMEIRIRPVGVVRSPFKTRSDAPAQGRFSSEESEIHIFPEYLDAVDGLELFSHIFVLYWLHLAERNVLRVVPRGKRKKRGVFSTRAPARPNPVGLCLVELLECGEILRVRGLDALDGSPVIDIKPYYEDIDSLGF.

Residues 8-137 enclose the TsaA-like domain; it reads IRPVGVVRSP…YYEDIDSLGF (130 aa). Residues 25-27, 63-64, Arg-87, Leu-97, and 117-120 each bind S-adenosyl-L-methionine; these read PAQ, HL, and LDGS.

The protein belongs to the tRNA methyltransferase O family.

The chain is Probable S-adenosyl-L-methionine-binding protein MTH_1797 from Methanothermobacter thermautotrophicus (strain ATCC 29096 / DSM 1053 / JCM 10044 / NBRC 100330 / Delta H) (Methanobacterium thermoautotrophicum).